A 161-amino-acid chain; its full sequence is FAD synthase (161 aa).

ATP-binding positions include 19–20 (TF), 24–27 (HPGH), Asp106, and Tyr133.

It belongs to the archaeal FAD synthase family. Homodimer. Requires a divalent metal cation as cofactor.

It catalyses the reaction FMN + ATP + H(+) = FAD + diphosphate. Its pathway is cofactor biosynthesis; FAD biosynthesis; FAD from FMN: step 1/1. Its function is as follows. Catalyzes the transfer of the AMP portion of ATP to flavin mononucleotide (FMN) to produce flavin adenine dinucleotide (FAD) coenzyme. This chain is FAD synthase, found in Methanothermobacter marburgensis (strain ATCC BAA-927 / DSM 2133 / JCM 14651 / NBRC 100331 / OCM 82 / Marburg) (Methanobacterium thermoautotrophicum).